Consider the following 494-residue polypeptide: Glycerol kinase (494 aa).

Threonine 13 contacts ADP. Residues threonine 13, threonine 14, and serine 15 each coordinate ATP. Residue threonine 13 coordinates sn-glycerol 3-phosphate. Arginine 17 lines the ADP pocket. The sn-glycerol 3-phosphate site is built by arginine 83, glutamate 84, tyrosine 135, and aspartate 244. Arginine 83, glutamate 84, tyrosine 135, aspartate 244, and glutamine 245 together coordinate glycerol. The ADP site is built by threonine 266 and glycine 309. Residues threonine 266, glycine 309, glutamine 313, and glycine 410 each contribute to the ATP site. The ADP site is built by glycine 410 and asparagine 414.

The protein belongs to the FGGY kinase family.

It carries out the reaction glycerol + ATP = sn-glycerol 3-phosphate + ADP + H(+). Its pathway is polyol metabolism; glycerol degradation via glycerol kinase pathway; sn-glycerol 3-phosphate from glycerol: step 1/1. Inhibited by fructose 1,6-bisphosphate (FBP). In terms of biological role, key enzyme in the regulation of glycerol uptake and metabolism. Catalyzes the phosphorylation of glycerol to yield sn-glycerol 3-phosphate. This Shewanella putrefaciens (strain CN-32 / ATCC BAA-453) protein is Glycerol kinase.